A 168-amino-acid polypeptide reads, in one-letter code: MAYQDEESKEYSEKVVKIDRVAKVVKGGRRFSFNALSVVGDQKGKVGIGFGKANEVPDAIRKSIEAAKKHLVKINFKGHTIPHEVVGKFKSARVILKPSTAGTGIIAGASVRSIVEKAGIQDVLTKSWGSSNPVNIVKATLDALEQLETPILAAKKRGISLNQLFGKD.

Residues 11–74 (YSEKVVKIDR…EAAKKHLVKI (64 aa)) enclose the S5 DRBM domain.

The protein belongs to the universal ribosomal protein uS5 family. In terms of assembly, part of the 30S ribosomal subunit. Contacts proteins S4 and S8.

In terms of biological role, with S4 and S12 plays an important role in translational accuracy. Located at the back of the 30S subunit body where it stabilizes the conformation of the head with respect to the body. This chain is Small ribosomal subunit protein uS5, found in Leptospira borgpetersenii serovar Hardjo-bovis (strain JB197).